The following is a 425-amino-acid chain: Adenosylhomocysteinase (425 aa).

Substrate-binding residues include Thr60, Asp132, and Glu157. NAD(+) is bound at residue 158–160 (TTT). Substrate contacts are provided by Lys187 and Asp191. Residues Asn192, 221 to 226 (GYGWCG), Glu244, Asn279, 300 to 302 (SGH), and Asn347 contribute to the NAD(+) site.

This sequence belongs to the adenosylhomocysteinase family. NAD(+) serves as cofactor.

The protein resides in the cytoplasm. The catalysed reaction is S-adenosyl-L-homocysteine + H2O = L-homocysteine + adenosine. Its pathway is amino-acid biosynthesis; L-homocysteine biosynthesis; L-homocysteine from S-adenosyl-L-homocysteine: step 1/1. May play a key role in the regulation of the intracellular concentration of adenosylhomocysteine. The sequence is that of Adenosylhomocysteinase from Nostoc sp. (strain PCC 7120 / SAG 25.82 / UTEX 2576).